The following is a 457-amino-acid chain: Siroheme synthase (457 aa).

A precorrin-2 dehydrogenase /sirohydrochlorin ferrochelatase region spans residues 1-204 (MDHLPIFCQL…ADEKAVNATT (204 aa)). NAD(+)-binding positions include 22–23 (DV) and 43–44 (LT). Residue Ser128 is modified to Phosphoserine. The segment at 216–457 (GEVVLVGAGP…RDKLNWFSNH (242 aa)) is uroporphyrinogen-III C-methyltransferase. Position 225 (Pro225) interacts with S-adenosyl-L-methionine. Residue Asp248 is the Proton acceptor of the active site. Catalysis depends on Lys270, which acts as the Proton donor. S-adenosyl-L-methionine-binding positions include 301-303 (GGD), Ile306, 331-332 (TA), Met382, and Gly411.

The protein in the N-terminal section; belongs to the precorrin-2 dehydrogenase / sirohydrochlorin ferrochelatase family. This sequence in the C-terminal section; belongs to the precorrin methyltransferase family.

The enzyme catalyses uroporphyrinogen III + 2 S-adenosyl-L-methionine = precorrin-2 + 2 S-adenosyl-L-homocysteine + H(+). It catalyses the reaction precorrin-2 + NAD(+) = sirohydrochlorin + NADH + 2 H(+). The catalysed reaction is siroheme + 2 H(+) = sirohydrochlorin + Fe(2+). The protein operates within cofactor biosynthesis; adenosylcobalamin biosynthesis; precorrin-2 from uroporphyrinogen III: step 1/1. It participates in cofactor biosynthesis; adenosylcobalamin biosynthesis; sirohydrochlorin from precorrin-2: step 1/1. Its pathway is porphyrin-containing compound metabolism; siroheme biosynthesis; precorrin-2 from uroporphyrinogen III: step 1/1. It functions in the pathway porphyrin-containing compound metabolism; siroheme biosynthesis; siroheme from sirohydrochlorin: step 1/1. The protein operates within porphyrin-containing compound metabolism; siroheme biosynthesis; sirohydrochlorin from precorrin-2: step 1/1. Multifunctional enzyme that catalyzes the SAM-dependent methylations of uroporphyrinogen III at position C-2 and C-7 to form precorrin-2 via precorrin-1. Then it catalyzes the NAD-dependent ring dehydrogenation of precorrin-2 to yield sirohydrochlorin. Finally, it catalyzes the ferrochelation of sirohydrochlorin to yield siroheme. The chain is Siroheme synthase from Salmonella schwarzengrund (strain CVM19633).